The primary structure comprises 370 residues: Histidinol-phosphate aminotransferase (370 aa).

N6-(pyridoxal phosphate)lysine is present on Lys-222.

It belongs to the class-II pyridoxal-phosphate-dependent aminotransferase family. Histidinol-phosphate aminotransferase subfamily. As to quaternary structure, homodimer. Requires pyridoxal 5'-phosphate as cofactor.

It carries out the reaction L-histidinol phosphate + 2-oxoglutarate = 3-(imidazol-4-yl)-2-oxopropyl phosphate + L-glutamate. Its pathway is amino-acid biosynthesis; L-histidine biosynthesis; L-histidine from 5-phospho-alpha-D-ribose 1-diphosphate: step 7/9. This chain is Histidinol-phosphate aminotransferase, found in Bacillus cytotoxicus (strain DSM 22905 / CIP 110041 / 391-98 / NVH 391-98).